The sequence spans 159 residues: uncharacterized protein (159 aa).

This is an uncharacterized protein from Bacillus subtilis (strain 168).